The primary structure comprises 459 residues: Bifunctional protein GlmU (459 aa).

A pyrophosphorylase region spans residues 1-230 (MSNRFAVILA…FDETLGVNDR (230 aa)). UDP-N-acetyl-alpha-D-glucosamine contacts are provided by residues 9–12 (LAAG), Lys23, Gln73, and 78–79 (GT). Asp103 contacts Mg(2+). Residues Gly140, Glu155, Asn170, and Asn228 each contribute to the UDP-N-acetyl-alpha-D-glucosamine site. Residue Asn228 participates in Mg(2+) binding. Residues 231–251 (VALSQAEIIMKNRINRKNMVN) are linker. An N-acetyltransferase region spans residues 252 to 459 (GVTIIDPSNT…VDQLLNKKKS (208 aa)). UDP-N-acetyl-alpha-D-glucosamine is bound by residues Arg333 and Lys351. The active-site Proton acceptor is the His363. 2 residues coordinate UDP-N-acetyl-alpha-D-glucosamine: Tyr366 and Asn377. Acetyl-CoA-binding positions include 386-387 (NY), Ala423, and Arg440.

This sequence in the N-terminal section; belongs to the N-acetylglucosamine-1-phosphate uridyltransferase family. The protein in the C-terminal section; belongs to the transferase hexapeptide repeat family. In terms of assembly, homotrimer. It depends on Mg(2+) as a cofactor.

Its subcellular location is the cytoplasm. It carries out the reaction alpha-D-glucosamine 1-phosphate + acetyl-CoA = N-acetyl-alpha-D-glucosamine 1-phosphate + CoA + H(+). It catalyses the reaction N-acetyl-alpha-D-glucosamine 1-phosphate + UTP + H(+) = UDP-N-acetyl-alpha-D-glucosamine + diphosphate. The protein operates within nucleotide-sugar biosynthesis; UDP-N-acetyl-alpha-D-glucosamine biosynthesis; N-acetyl-alpha-D-glucosamine 1-phosphate from alpha-D-glucosamine 6-phosphate (route II): step 2/2. Its pathway is nucleotide-sugar biosynthesis; UDP-N-acetyl-alpha-D-glucosamine biosynthesis; UDP-N-acetyl-alpha-D-glucosamine from N-acetyl-alpha-D-glucosamine 1-phosphate: step 1/1. It participates in bacterial outer membrane biogenesis; LPS lipid A biosynthesis. Its function is as follows. Catalyzes the last two sequential reactions in the de novo biosynthetic pathway for UDP-N-acetylglucosamine (UDP-GlcNAc). The C-terminal domain catalyzes the transfer of acetyl group from acetyl coenzyme A to glucosamine-1-phosphate (GlcN-1-P) to produce N-acetylglucosamine-1-phosphate (GlcNAc-1-P), which is converted into UDP-GlcNAc by the transfer of uridine 5-monophosphate (from uridine 5-triphosphate), a reaction catalyzed by the N-terminal domain. This chain is Bifunctional protein GlmU, found in Bacillus anthracis (strain A0248).